The chain runs to 466 residues: MLRSTSTVTLLSGGAARTPGAPSRRANVCRLRLTVPPESPVPEQCEKKIERKEQLLDLSNGEPTRKLPQGVVYGVVRRSDQNQQKEMVVYGWSTSQLKEEMNYIKDVRATLEKVRKRMYGDYDEMRQKIRQLTQELSVSHAQQEYLENHIQTQSSALDRFNAMNSALASDSIGLQKTLVDVTLENSNIKDQIRNLQQTYEASMDKLREKQRQLEVAQVENQLLKMKVESSQEANAEVMREMTKKLYSQYEEKLQEEQRKHSAEKEALLEETNSFLKAIEEANKKMQAAEISLEEKDQRIGELDRLIERMEKERHQLQLQLLEHETEMSGELTDSDKERYQQLEEASASLRERIRHLDDMVHCQQKKVKQMVEEIESLKKKLQQKQLLILQLLEKISFLEGENNELQSRLDYLTETQAKTEVETREIGVGCDLLPSQTGRTREIVMPSRNYTPYTRVLELTMKKTLT.

The segment covering 1-10 has biased composition (polar residues); sequence MLRSTSTVTL. Positions 1-20 are cleaved as a signal peptide; that stretch reads MLRSTSTVTLLSGGAARTPG. The disordered stretch occupies residues 1–23; it reads MLRSTSTVTLLSGGAARTPGAPS. 2 coiled-coil regions span residues 96–142 and 174–418; these read QLKE…SHAQ and LQKT…TQAK. A Required for DYNLL1-binding motif is present at residues 424–425; that stretch reads RE.

Belongs to the MYZAP family. In terms of assembly, interacts with DSP, MPRIP and TJP1/ZO1. Interaction with MPRIP inhibits the activation of transcription factor SRF. Interacts with GRIN1. Interacts with DYNLL1. As to expression, detected in heart, liver, skeletal muscle, placenta, small intestine, lung, prostate and testis. Expressed in arrector pili muscle (at protein level).

The protein localises to the cytoplasm. Its subcellular location is the cytoskeleton. The protein resides in the cell membrane. It localises to the myofibril. It is found in the sarcomere. The protein localises to the i band. Its subcellular location is the z line. The protein resides in the cell junction. In terms of biological role, plays a role in cellular signaling via Rho-related GTP-binding proteins and subsequent activation of transcription factor SRF. Targets TJP1 to cell junctions. In cortical neurons, may play a role in glutaminergic signal transduction through interaction with the NMDA receptor subunit GRIN1. This chain is Myocardial zonula adherens protein (MYZAP), found in Homo sapiens (Human).